The primary structure comprises 983 residues: Ephrin type-A receptor 3 (983 aa).

A signal peptide spans 1–20 (MDCQLSILLLLSCSVLDSFG). Residues 21–541 (ELIPQPSNEV…SFSISGESSQ (521 aa)) lie on the Extracellular side of the membrane. An Eph LBD domain is found at 29-207 (EVNLLDSKTI…YFKKCPFTVK (179 aa)). 5 N-linked (GlcNAc...) asparagine glycosylation sites follow: Asn232, Asn337, Asn391, Asn404, and Asn493. 2 consecutive Fibronectin type-III domains span residues 325-435 (PPSS…TNQA) and 436-531 (APSP…TSPD). A helical membrane pass occupies residues 542-565 (VVMIAISAAVAIILLTVVIYVLIG). Residues 566–983 (RFCGYKSKHG…TQSKNGPVPV (418 aa)) are Cytoplasmic-facing. Tyr596 and Tyr602 each carry phosphotyrosine; by autocatalysis. The region spanning 621 to 882 (ISIDKVVGAG…QIVSILDKLI (262 aa)) is the Protein kinase domain. ATP is bound by residues 628-633 (GAGEFG), Lys653, and 700-706 (EYMENGS). At Tyr701 the chain carries Phosphotyrosine; by autocatalysis. Asp746 serves as the catalytic Proton acceptor. Residue 750–751 (RN) coordinates ATP. The residue at position 779 (Tyr779) is a Phosphotyrosine; by autocatalysis. Residues 911–975 (TTFRTTGDWL…ISSIKALETQ (65 aa)) enclose the SAM domain. Residue Tyr937 is modified to Phosphotyrosine. The PDZ-binding motif lies at 981 to 983 (VPV).

This sequence belongs to the protein kinase superfamily. Tyr protein kinase family. Ephrin receptor subfamily. In terms of assembly, heterotetramer upon binding of the ligand. The heterotetramer is composed of an ephrin dimer and a receptor dimer. Oligomerization is probably required to induce biological responses. Forms a ternary EFNA5-EPHA3-ADAM10 complex mediating EFNA5 extracellular domain shedding by ADAM10 which regulates the EFNA5-EPHA3 complex internalization and function. Interacts with NCK1 (via SH2 domain); mediates EFNA5-EPHA3 signaling. Interacts (phosphorylated) with PTPN1; dephosphorylates EPHA3 and may regulate its trafficking and function. Interacts (phosphorylated) with CRK; mediates EFNA5-EPHA3 signaling through RHOA GTPase activation. Autophosphorylates upon activation by EFNA5. Phosphorylation on Tyr-602 mediates interaction with NCK1. Dephosphorylated by PTPN1. In terms of tissue distribution, widely expressed. Highest level in placenta.

The protein resides in the cell membrane. The protein localises to the secreted. It carries out the reaction L-tyrosyl-[protein] + ATP = O-phospho-L-tyrosyl-[protein] + ADP + H(+). Functionally, receptor tyrosine kinase which binds promiscuously membrane-bound ephrin family ligands residing on adjacent cells, leading to contact-dependent bidirectional signaling into neighboring cells. The signaling pathway downstream of the receptor is referred to as forward signaling while the signaling pathway downstream of the ephrin ligand is referred to as reverse signaling. Highly promiscuous for ephrin-A ligands it binds preferentially EFNA5. Upon activation by EFNA5 regulates cell-cell adhesion, cytoskeletal organization and cell migration. Plays a role in cardiac cells migration and differentiation and regulates the formation of the atrioventricular canal and septum during development probably through activation by EFNA1. Involved in the retinotectal mapping of neurons. May also control the segregation but not the guidance of motor and sensory axons during neuromuscular circuit development. The polypeptide is Ephrin type-A receptor 3 (EPHA3) (Homo sapiens (Human)).